Here is a 239-residue protein sequence, read N- to C-terminus: DUP240 protein DFP3 (239 aa).

The Cytoplasmic segment spans residues 1-54 (MQPHLDNNSNNDDVKLDTLGEQNVLSSAENITLPEDTFKSYMTYLLYEMAHYKP). Residues 55–75 (MIFSFLALSVSILIVVIFHNV) traverse the membrane as a helical segment. Topologically, residues 76-79 (KACD) are extracellular. The helical transmembrane segment at 80–104 (VVFGFSIFVTSILFLSTLIPFNVYI) threads the bilayer. Residues 105-239 (SDEGFRIKLL…RKQYPDADIP (135 aa)) are Cytoplasmic-facing.

It belongs to the DUP/COS family. As to quaternary structure, interacts according to large scale protein interaction studies with MEC3 and ULP1.

The protein localises to the membrane. The polypeptide is DUP240 protein DFP3 (Saccharomyces cerevisiae (strain ATCC 204508 / S288c) (Baker's yeast)).